We begin with the raw amino-acid sequence, 670 residues long: Leucine-rich repeat-containing protein 45 (670 aa).

6 LRR repeats span residues 58 to 80 (TLCT…LLLR), 87 to 107 (VLRF…EALG), 115 to 136 (SIQS…FATF), 145 to 166 (ALQR…ELAL), 173 to 194 (TLQQ…ALMN), and 201 to 212 (TLWRLDLAGNNI). The stretch at 252 to 645 (REEKSKQFLD…IARIRDEEAQ (394 aa)) forms a coiled coil. Serine 661 carries the post-translational modification Phosphoserine; by NEK2.

As to quaternary structure, homomer. Interacts with CROCC/rootletin and CEP250. Interacts with CEP44. Interacts with CCDC102B (via N-terminus). Post-translationally, phosphorylated by NEK2 during misosis, phosphorylation reduces centrosomal localization which subsequently leads to centrosome separation.

The protein resides in the cytoplasm. It is found in the cytoskeleton. Its subcellular location is the microtubule organizing center. The protein localises to the centrosome. Its function is as follows. Component of the proteinaceous fiber-like linker between two centrioles, required for centrosome cohesion. This chain is Leucine-rich repeat-containing protein 45 (LRRC45), found in Homo sapiens (Human).